A 505-amino-acid polypeptide reads, in one-letter code: Flagellin (505 aa).

This sequence belongs to the bacterial flagellin family.

Its subcellular location is the secreted. The protein localises to the bacterial flagellum. Its function is as follows. Flagellin is the subunit protein which polymerizes to form the filaments of bacterial flagella. The protein is Flagellin (fliC) of Salmonella enteritidis.